Consider the following 134-residue polypeptide: Putative pre-16S rRNA nuclease (134 aa).

The protein belongs to the YqgF nuclease family.

It localises to the cytoplasm. In terms of biological role, could be a nuclease involved in processing of the 5'-end of pre-16S rRNA. The protein is Putative pre-16S rRNA nuclease of Helicobacter pylori (strain J99 / ATCC 700824) (Campylobacter pylori J99).